The sequence spans 106 residues: Urease subunit beta (106 aa).

It belongs to the urease beta subunit family. As to quaternary structure, heterotrimer of UreA (gamma), UreB (beta) and UreC (alpha) subunits. Three heterotrimers associate to form the active enzyme. The apoenzyme interacts with an accessory complex composed of UreD, UreF and UreG, which is required for the assembly of the nickel containing metallocenter of UreC. The UreE protein may also play a direct role as a metallochaperone in nickel transfer to the urease apoprotein.

It localises to the cytoplasm. It carries out the reaction urea + 2 H2O + H(+) = hydrogencarbonate + 2 NH4(+). It participates in nitrogen metabolism; urea degradation; CO(2) and NH(3) from urea (urease route): step 1/1. The apoenzyme can be activated in vitro in the presence of nickel ions and carbon dioxide, which promotes carboxylation of 'Lys-217' of the UreC (alpha) subunit. This Klebsiella aerogenes (Enterobacter aerogenes) protein is Urease subunit beta.